The chain runs to 109 residues: MEMDLNNRLTEDETLEQAYDIFLELAADNLDPADIILFNLQFEERGGAELFDPAEDWQEHVDFDLNPDFFAEVVIGLADTEDGEINDIFARVLLCREKDHKLCHILWRE.

The protein belongs to the putative dsDNA mimic protein family.

Functionally, may act as a double-stranded DNA (dsDNA) mimic. Probably regulates the activity of a dsDNA-binding protein. This Salmonella choleraesuis (strain SC-B67) protein is Putative double-stranded DNA mimic protein YciU.